The primary structure comprises 237 residues: Cyclic-di-GMP-binding biofilm dispersal mediator protein (237 aa).

10–34 contacts NAD(+); that stretch reads LILGGSRGIGAAIVRRFVTDGANVR. S132 serves as a coordination point for substrate. Catalysis depends on Y146, which acts as the Proton acceptor.

It belongs to the short-chain dehydrogenases/reductases (SDR) family.

Functionally, increases biofilm dispersal. Acts by binding directly to the signaling molecule cyclic-di-GMP, which decreases the intracellular concentration of cyclic-di-GMP and leads to biofilm dispersal. Also controls other biofilm-related phenotypes such as cell motility, cell size, cell aggregation and production of extracellular DNA and extracellular polysaccharides (EPS). Does not act as a phosphodiesterase. The protein is Cyclic-di-GMP-binding biofilm dispersal mediator protein (bdcA) of Escherichia coli (strain K12).